The primary structure comprises 456 residues: Shufflon protein D' (456 aa).

The interval methionine 1 to glycine 361 is constant region. The tract at residues threonine 362 to asparagine 456 is variable region.

This Escherichia coli protein is Shufflon protein D'.